Reading from the N-terminus, the 315-residue chain is High mobility group protein hmg-12 (315 aa).

The tract at residues 57–315 (VKNETDSEAV…AIDAFFDGSD (259 aa)) is disordered. A compositionally biased stretch (polar residues) spans 77–86 (ANDSPANTND). The a.T hook 1 DNA-binding region spans 118–128 (PVKKGRGRPIK). Composition is skewed to low complexity over residues 147 to 160 (AQTP…IDTA) and 196 to 205 (AADTDAIDTA).

This sequence belongs to the HMGA family.

The protein resides in the nucleus. Its function is as follows. Transcriptional regulator. Binds to specific sequence motifs in regulatory elements. May recruit transcription factors, or may induce structural changes in chromatin, to thereby modulate embryonic expression of ATP-dependent chaperone cdc-48.1. This is High mobility group protein hmg-12 from Caenorhabditis elegans.